A 148-amino-acid chain; its full sequence is MNSRHVGQDSTTRDWYRDPKTIAWISDAVMEKTLGVARRPIRVSDKVILNVLDSFLQNNRPAIGHGCGVTNNPSYVTCDKYCPSLAPIETNPVVVRVVEFISQYIRDEYSFQEAGKQWSAWPSDRIQKHSQIKVRDRRPIPFQFNMNF.

This sequence belongs to the IIV-6 395R family.

This is an uncharacterized protein from Aedes vexans (Inland floodwater mosquito).